Reading from the N-terminus, the 502-residue chain is Probable malate:quinone oxidoreductase 1 (502 aa).

Belongs to the MQO family. FAD is required as a cofactor.

It catalyses the reaction (S)-malate + a quinone = a quinol + oxaloacetate. It functions in the pathway carbohydrate metabolism; tricarboxylic acid cycle; oxaloacetate from (S)-malate (quinone route): step 1/1. This is Probable malate:quinone oxidoreductase 1 from Pseudomonas putida (strain ATCC 47054 / DSM 6125 / CFBP 8728 / NCIMB 11950 / KT2440).